We begin with the raw amino-acid sequence, 452 residues long: Histone acetyltransferase type B subunit 2 (452 aa).

WD repeat units lie at residues Tyr155–Glu195, His205–Ser245, His256–Ala296, Lys300–Ser340, Ser344–Ser384, and Gly401–Glu441.

It belongs to the WD repeat RBAP46/RBAP48/MSI1 family. Component of the HAT-B complex composed of at least HAT1 and HAT2. The HAT-B complex binds to histone H4 tail.

It is found in the cytoplasm. Its subcellular location is the nucleus. Its function is as follows. Regulatory subunit of the histone acetylase B (HAT-B) complex. The complex acetylates 'Lys-12' of histone H4 which is required for telomeric silencing. This Yarrowia lipolytica (strain CLIB 122 / E 150) (Yeast) protein is Histone acetyltransferase type B subunit 2 (HAT2).